We begin with the raw amino-acid sequence, 135 residues long: Glutaredoxin-C4 (135 aa).

Positions 32 to 132 constitute a Glutaredoxin domain; that stretch reads ADFVKKTISS…KLLGVSGNKE (101 aa). The cysteines at positions 52 and 55 are disulfide-linked.

This sequence belongs to the glutaredoxin family. CPYC subfamily.

Its subcellular location is the cytoplasm. Has a glutathione-disulfide oxidoreductase activity in the presence of NADPH and glutathione reductase. Reduces low molecular weight disulfides and proteins. The polypeptide is Glutaredoxin-C4 (GRXC4) (Arabidopsis thaliana (Mouse-ear cress)).